The chain runs to 122 residues: Small ribosomal subunit protein uS13 (122 aa).

The interval 94–122 (GLPVRGQVTQKNARTRKGPRKTVAGKKGK) is disordered. Residues 106–122 (ARTRKGPRKTVAGKKGK) are compositionally biased toward basic residues.

This sequence belongs to the universal ribosomal protein uS13 family. Part of the 30S ribosomal subunit. Forms a loose heterodimer with protein S19. Forms two bridges to the 50S subunit in the 70S ribosome.

Functionally, located at the top of the head of the 30S subunit, it contacts several helices of the 16S rRNA. In the 70S ribosome it contacts the 23S rRNA (bridge B1a) and protein L5 of the 50S subunit (bridge B1b), connecting the 2 subunits; these bridges are implicated in subunit movement. Contacts the tRNAs in the A and P-sites. This chain is Small ribosomal subunit protein uS13, found in Mycoplasma mobile (strain ATCC 43663 / 163K / NCTC 11711) (Mesomycoplasma mobile).